An 841-amino-acid chain; its full sequence is Protein translocase subunit SecA (841 aa).

ATP-binding positions include Q86, 104–108, and D493; that span reads GEGKT. The segment at 788–822 is disordered; that stretch reads EEVAEGKAVRPSANGQEDKKAKRKPVRKAENIGRN. Positions 825, 827, 836, and 837 each coordinate Zn(2+).

This sequence belongs to the SecA family. As to quaternary structure, monomer and homodimer. Part of the essential Sec protein translocation apparatus which comprises SecA, SecYEG and auxiliary proteins SecDF. Other proteins may also be involved. Requires Zn(2+) as cofactor.

Its subcellular location is the cell membrane. It is found in the cytoplasm. It catalyses the reaction ATP + H2O + cellular proteinSide 1 = ADP + phosphate + cellular proteinSide 2.. In terms of biological role, part of the Sec protein translocase complex. Interacts with the SecYEG preprotein conducting channel. Has a central role in coupling the hydrolysis of ATP to the transfer of proteins into and across the cell membrane, serving as an ATP-driven molecular motor driving the stepwise translocation of polypeptide chains across the membrane. This Shouchella clausii (strain KSM-K16) (Alkalihalobacillus clausii) protein is Protein translocase subunit SecA.